Reading from the N-terminus, the 135-residue chain is Small ribosomal subunit protein uS9 (135 aa).

Belongs to the universal ribosomal protein uS9 family.

This Archaeoglobus fulgidus (strain ATCC 49558 / DSM 4304 / JCM 9628 / NBRC 100126 / VC-16) protein is Small ribosomal subunit protein uS9 (rps9).